We begin with the raw amino-acid sequence, 102 residues long: MDPPTRPSVSGPRTRARPPPPEALPTVGFEEEVYDCLDYYYLRDFPASGAGRSKGRTRREQQLRTNYPVPGGHERKVAQILLNGQRKRRQRQLQPRPRTRLA.

Disordered stretches follow at residues methionine 1–threonine 26 and proline 46–alanine 102. Basic residues predominate over residues glutamine 85 to alanine 102.

The protein belongs to the NUPR family.

It is found in the nucleus. In terms of biological role, acts as a transcriptional repressor by inhibiting gene expression at the NUPR1 promoter in a p53/TP53-dependent manner in cancer cells. Involved in the G1 cell cycle arrest, and in a decrease in cell viability and cell proliferation of pancreatic cancer cells. Plays a role as a negative regulator of the protumoral factor NUPR1. The polypeptide is Nuclear protein 2 (Mus musculus (Mouse)).